The primary structure comprises 90 residues: MPFGLIVIGIILAIAAYRDTLGELFSIIKDVSKDAKGFGYWVLAAVILGFAASIKPIKEPVNAFMILLMIVLLIRKRGAIDQISNQLRGS.

A run of 3 helical transmembrane segments spans residues 1 to 21 (MPFG…RDTL), 37 to 57 (GFGY…IKPI), and 60 to 80 (PVNA…RGAI).

The protein localises to the virion membrane. Component of the phage injection machinery. Required for DNA injection in the membrane transformation event. Involved in the formation of the membrane tail tube to connect the virus interior with the host cytosol. Essential for viral infectivity. This chain is Protein P18 (XVIII), found in Acinetobacter calcoaceticus (Arthrobacter siderocapsulatus).